A 295-amino-acid chain; its full sequence is Cytidine deaminase (295 aa).

CMP/dCMP-type deaminase domains are found at residues 48 to 168 (EDAD…FGPA) and 187 to 295 (DDDE…YLSL). 89–91 (NME) is a substrate binding site. H102 provides a ligand contact to Zn(2+). E104 serves as the catalytic Proton donor. Positions 129 and 132 each coordinate Zn(2+).

This sequence belongs to the cytidine and deoxycytidylate deaminase family. As to quaternary structure, homodimer. Requires Zn(2+) as cofactor.

The enzyme catalyses cytidine + H2O + H(+) = uridine + NH4(+). It catalyses the reaction 2'-deoxycytidine + H2O + H(+) = 2'-deoxyuridine + NH4(+). This enzyme scavenges exogenous and endogenous cytidine and 2'-deoxycytidine for UMP synthesis. In Vibrio cholerae serotype O1 (strain ATCC 39315 / El Tor Inaba N16961), this protein is Cytidine deaminase.